The chain runs to 399 residues: Bone morphogenetic protein 8B (399 aa).

The signal sequence occupies residues 1-19; sequence MAARPGLLWLLGLALCVLG. A propeptide spanning residues 20–260 is cleaved from the precursor; it reads GGHLSHPPHV…ANQSPVRAPR (241 aa). Residues Asn155 and Asn340 are each glycosylated (N-linked (GlcNAc...) asparagine). Intrachain disulfides connect Cys298–Cys364, Cys327–Cys396, and Cys331–Cys398.

The protein belongs to the TGF-beta family. As to quaternary structure, homodimer; disulfide-linked. As to expression, expressed in testis. Expressed in decidual cells of the uterus and in trophoblast cells of the labyrinthine region of the placenta and in the inner root sheath of hair follicles of early postnatal skin. Expressed in the extraembryonic ectoderm in pregastrula and gastrula stage mouse embryos. Expressed in brown adipose tissue and brain.

The protein localises to the secreted. Its function is as follows. Induces cartilage and bone formation. May be the osteoinductive factor responsible for the phenomenon of epithelial osteogenesis. Plays a role in calcium regulation and bone homeostasis. Involved in the generation of primordial germ cells; this function involves Bmp4 in a synergistic manner though separate receptor complexes seem to be involved. Required for the initiation and maintenance of spermatogenesis. Signaling protein involved in regulation of thermogenesis and energy balance. Proposed to increase the peripheral response of brown adipose tissue (BAT) to adrenergic stimulation while acting centrally in the hypothalamus to increase sympathetic output to BAT. The sequence is that of Bone morphogenetic protein 8B (Bmp8b) from Mus musculus (Mouse).